Consider the following 115-residue polypeptide: Cytochrome c (115 aa).

Residues Cys26, Cys29, His30, and Met91 each coordinate heme c.

Belongs to the cytochrome c family. In terms of processing, binds 1 heme c group covalently per subunit.

It localises to the mitochondrion intermembrane space. Functionally, electron carrier protein. The oxidized form of the cytochrome c heme group can accept an electron from the heme group of the cytochrome c1 subunit of cytochrome reductase. Cytochrome c then transfers this electron to the cytochrome oxidase complex, the final protein carrier in the mitochondrial electron-transport chain. This is Cytochrome c from Theileria annulata.